A 365-amino-acid chain; its full sequence is tRNA/tmRNA (uracil-C(5))-methyltransferase (365 aa).

5 residues coordinate S-adenosyl-L-methionine: Gln-196, Tyr-224, Asn-229, Glu-245, and Asp-298. Residue Cys-323 is the Nucleophile of the active site. The active-site Proton acceptor is Glu-357.

This sequence belongs to the class I-like SAM-binding methyltransferase superfamily. RNA M5U methyltransferase family. TrmA subfamily.

It catalyses the reaction uridine(54) in tRNA + S-adenosyl-L-methionine = 5-methyluridine(54) in tRNA + S-adenosyl-L-homocysteine + H(+). It carries out the reaction uridine(341) in tmRNA + S-adenosyl-L-methionine = 5-methyluridine(341) in tmRNA + S-adenosyl-L-homocysteine + H(+). In terms of biological role, dual-specificity methyltransferase that catalyzes the formation of 5-methyluridine at position 54 (m5U54) in all tRNAs, and that of position 341 (m5U341) in tmRNA (transfer-mRNA). This Nautilia profundicola (strain ATCC BAA-1463 / DSM 18972 / AmH) protein is tRNA/tmRNA (uracil-C(5))-methyltransferase.